Here is a 236-residue protein sequence, read N- to C-terminus: Large ribosomal subunit protein uL1 (236 aa).

It belongs to the universal ribosomal protein uL1 family. Part of the 50S ribosomal subunit.

Its function is as follows. Binds directly to 23S rRNA. The L1 stalk is quite mobile in the ribosome, and is involved in E site tRNA release. Functionally, protein L1 is also a translational repressor protein, it controls the translation of the L11 operon by binding to its mRNA. The chain is Large ribosomal subunit protein uL1 from Kocuria rhizophila (strain ATCC 9341 / DSM 348 / NBRC 103217 / DC2201).